Here is a 240-residue protein sequence, read N- to C-terminus: Orotidine 5'-phosphate decarboxylase (240 aa).

Substrate is bound by residues Asp19, Lys41, 68 to 77, Thr123, Arg184, Gln193, Gly213, and Arg214; that span reads DYKYYDIEET. Lys70 acts as the Proton donor in catalysis.

This sequence belongs to the OMP decarboxylase family. Type 1 subfamily. Homodimer.

It carries out the reaction orotidine 5'-phosphate + H(+) = UMP + CO2. It participates in pyrimidine metabolism; UMP biosynthesis via de novo pathway; UMP from orotate: step 2/2. Its function is as follows. Catalyzes the decarboxylation of orotidine 5'-monophosphate (OMP) to uridine 5'-monophosphate (UMP). The polypeptide is Orotidine 5'-phosphate decarboxylase (Nitrobacter winogradskyi (strain ATCC 25391 / DSM 10237 / CIP 104748 / NCIMB 11846 / Nb-255)).